The following is a 391-amino-acid chain: Histidinol-phosphate aminotransferase (391 aa).

K246 is modified (N6-(pyridoxal phosphate)lysine).

Belongs to the class-II pyridoxal-phosphate-dependent aminotransferase family. Histidinol-phosphate aminotransferase subfamily. Pyridoxal 5'-phosphate serves as cofactor.

The enzyme catalyses L-histidinol phosphate + 2-oxoglutarate = 3-(imidazol-4-yl)-2-oxopropyl phosphate + L-glutamate. Its pathway is amino-acid biosynthesis; L-histidine biosynthesis; L-histidine from 5-phospho-alpha-D-ribose 1-diphosphate: step 7/9. This Methanopyrus kandleri (strain AV19 / DSM 6324 / JCM 9639 / NBRC 100938) protein is Histidinol-phosphate aminotransferase.